Reading from the N-terminus, the 309-residue chain is UPF0282 protein Msed_0584 (309 aa).

This sequence belongs to the UPF0282 family.

This chain is UPF0282 protein Msed_0584, found in Metallosphaera sedula (strain ATCC 51363 / DSM 5348 / JCM 9185 / NBRC 15509 / TH2).